The primary structure comprises 506 residues: Glutamate--tRNA ligase (506 aa).

Positions 9-19 match the 'HIGH' region motif; sequence PSPTGFQHIGG. Residues 251–255 carry the 'KMSKS' region motif; the sequence is KLSKR. Residue Lys254 coordinates ATP.

This sequence belongs to the class-I aminoacyl-tRNA synthetase family. Glutamate--tRNA ligase type 1 subfamily. Monomer.

The protein localises to the cytoplasm. The enzyme catalyses tRNA(Glu) + L-glutamate + ATP = L-glutamyl-tRNA(Glu) + AMP + diphosphate. Catalyzes the attachment of glutamate to tRNA(Glu) in a two-step reaction: glutamate is first activated by ATP to form Glu-AMP and then transferred to the acceptor end of tRNA(Glu). This chain is Glutamate--tRNA ligase, found in Treponema denticola (strain ATCC 35405 / DSM 14222 / CIP 103919 / JCM 8153 / KCTC 15104).